Reading from the N-terminus, the 252-residue chain is Probable transcriptional regulatory protein Npun_R5651 (252 aa).

It belongs to the TACO1 family.

Its subcellular location is the cytoplasm. The chain is Probable transcriptional regulatory protein Npun_R5651 from Nostoc punctiforme (strain ATCC 29133 / PCC 73102).